The sequence spans 1063 residues: ATP-dependent helicase hrq1 (1063 aa).

The segment at 224-243 is disordered; it reads TQSRKNQPVPPDSPSIPNDS. One can recognise a Helicase ATP-binding domain in the interval 320-503; it reads INHLWNGFHV…KIFGVDNIKL (184 aa). 333-340 contacts ATP; the sequence is TSTSSGKS. A DEAH box motif is present at residues 444–447; sequence DEAH. Residues 539 to 717 enclose the Helicase C-terminal domain; the sequence is EASKLLIKFA…ELPINIRSDE (179 aa).

It belongs to the helicase family. HRQ1 subfamily. In terms of assembly, forms heptamer rings. Interacts with rhp14. The cofactor is Mg(2+).

Its subcellular location is the nucleus. The catalysed reaction is Couples ATP hydrolysis with the unwinding of duplex DNA by translocating in the 3'-5' direction.. It catalyses the reaction ATP + H2O = ADP + phosphate + H(+). Functionally, helicase with 3'-5' helicase activity involved in genome stability. Functions in the nucleotide excision repair (NER) pathway and plays a critical role in DNA interstrand cross-link repair. Unwinds relatively long duplex DNA up to 120-bp and requires a long 3'-tail of at least 70 nucleotides for efficient unwinding of duplex DNA. Shows both processive helicase and DNA strand annealing activities. Affects telomere length by a non-catalytic mechanism, probably through inhibiting telomerase by competing with it for ssDNA binding. The chain is ATP-dependent helicase hrq1 from Schizosaccharomyces pombe (strain 972 / ATCC 24843) (Fission yeast).